Consider the following 811-residue polypeptide: Abnormal pharyngeal pumping eat-20 (811 aa).

Residues methionine 1–alanine 20 form the signal peptide. Topologically, residues glutamine 21–tryptophan 749 are extracellular. Residues asparagine 90, asparagine 171, and asparagine 232 are each glycosylated (N-linked (GlcNAc...) asparagine). 3 EGF-like domains span residues proline 220 to glutamate 257, leucine 258 to glutamate 293, and alanine 301 to asparagine 335. Disulfide bonds link cysteine 224–cysteine 235, cysteine 229–cysteine 245, cysteine 247–cysteine 256, cysteine 261–cysteine 272, cysteine 266–cysteine 281, cysteine 283–cysteine 292, cysteine 305–cysteine 314, cysteine 309–cysteine 323, and cysteine 325–cysteine 334. The N-linked (GlcNAc...) asparagine glycan is linked to asparagine 371. Disordered regions lie at residues phenylalanine 544–threonine 579, phenylalanine 592–threonine 659, and proline 690–serine 739. The span at aspartate 551–glutamate 567 shows a compositional bias: acidic residues. The span at proline 570–threonine 579 shows a compositional bias: polar residues. Over residues aspartate 597–threonine 612 the composition is skewed to acidic residues. A compositionally biased stretch (low complexity) spans proline 626–threonine 639. Composition is skewed to acidic residues over residues methionine 640–glutamate 655 and isoleucine 705–glutamate 717. Residues isoleucine 750–valine 770 traverse the membrane as a helical segment. Residues leucine 771–isoleucine 811 lie on the Cytoplasmic side of the membrane.

The protein localises to the membrane. Its function is as follows. Regulates pharyngeal pumping during feeding. The chain is Abnormal pharyngeal pumping eat-20 (eat-20) from Caenorhabditis briggsae.